The following is an 89-amino-acid chain: MTSRPADQDSVRSSASVPLYPAASPVPAEAYYSESEDEAANDFLVRMGRQQSVLRRRRRRTRCVGLVIACLVVALLSGGFGALLVWLLR.

Over residues 1-10 the composition is skewed to basic and acidic residues; sequence MTSRPADQDS. The interval 1-21 is disordered; that stretch reads MTSRPADQDSVRSSASVPLYP. At 1–66 the chain is on the intravirion side; that stretch reads MTSRPADQDS…RRRRTRCVGL (66 aa). The Internalization motif motif lies at 20 to 23; that stretch reads YPAA. An acidic region spans residues 29-38; sequence EAYYSESEDE. Residues serine 33 and serine 35 each carry the phosphoserine; by host CK2 modification. A helical; Signal-anchor for type II membrane protein transmembrane segment spans residues 67 to 87; that stretch reads VIACLVVALLSGGFGALLVWL. Topologically, residues 88–89 are virion surface; it reads LR.

It belongs to the alphaherpesvirinae envelope protein US9 family. In terms of processing, phosphorylated on serines within the acidic cluster, possibly by host CK2. Phosphorylation determines whether endocytosed viral US9 traffics to the trans-Golgi network or recycles to the cell membrane.

It is found in the virion membrane. The protein localises to the host Golgi apparatus membrane. Its subcellular location is the host smooth endoplasmic reticulum membrane. The protein resides in the host cell membrane. In terms of biological role, essential for the anterograde spread of the infection throughout the host nervous system. Together with the gE/gI heterodimer, US9 is involved in the sorting and transport of viral structural components toward axon tips. This Homo sapiens (Human) protein is Envelope protein US9.